Consider the following 341-residue polypeptide: METTQYGHLLIDGFGVSLRKRRGRILILSKGEKKEIPMKSVKEVVIIGKAALSSELLKALAQSGTDLLIATPTGRPVARLIPAKAGGTARNRYEQYKSLEDRRGIEIARAVIVGKIRNQASNLSYYSKARRMDEELSSELYDAAQQLKREMEELKNEEFPDIDEARKRIMARESKCANIYWEKIASIMEEWKFRGREKRTDLEGNVIDPVNLCLNVCYNLLSAQIWKNVLRFGLDPFLGYLHVERPGRISLVYDLMEPFRPMVDRFVFSYLRGMSPSLFSSNIVSGTIASLRSRFFSDFMNWRLDYKGRKLGMETIMFLYVRDIVSFLRGGKEPTMPYIPW.

Residues E173, H242, and E257 each coordinate Mn(2+).

It belongs to the CRISPR-associated endonuclease Cas1 family. Homodimer, forms a heterotetramer with a Cas2 homodimer. It depends on Mg(2+) as a cofactor. Requires Mn(2+) as cofactor.

CRISPR (clustered regularly interspaced short palindromic repeat), is an adaptive immune system that provides protection against mobile genetic elements (viruses, transposable elements and conjugative plasmids). CRISPR clusters contain spacers, sequences complementary to antecedent mobile elements, and target invading nucleic acids. CRISPR clusters are transcribed and processed into CRISPR RNA (crRNA). Acts as a dsDNA endonuclease. Involved in the integration of spacer DNA into the CRISPR cassette. This chain is CRISPR-associated endonuclease Cas1, found in Korarchaeum cryptofilum (strain OPF8).